A 369-amino-acid polypeptide reads, in one-letter code: Superinfection exclusion protein (369 aa).

An N-terminal signal peptide occupies residues Met-1–Thr-15.

Belongs to the serpin family. Orthopoxvirus OPG040 subfamily. In terms of assembly, interacts with A56 protein.

The protein localises to the virion membrane. It localises to the host cell membrane. In terms of biological role, prevents cell to cell fusion via its interaction with A56 protein. The A56-K2 complex associates with components of the entry fusion complex (EFC) presumably to avoid superinfection and syncytium formation. This chain is Superinfection exclusion protein (OPG040), found in Vaccinia virus (strain Copenhagen) (VACV).